The primary structure comprises 956 residues: Glutamyl aminopeptidase (956 aa).

At 1-21 (MILEERSSWEGSKRYCIKTKH) the chain is on the cytoplasmic side. Residues 22 to 42 (VAIICAVVVAVGLIVGLSVGL) traverse the membrane as a helical; Signal-anchor for type II membrane protein segment. Residues 43–956 (TRSCDSTEGM…IRNWFLDLNG (914 aa)) are Extracellular-facing. A disordered region spans residues 48 to 87 (STEGMTQGTTQGTTQAPSHLPPVTSPPEDQGVCPASEDES). Positions 49 to 62 (TEGMTQGTTQGTTQ) are enriched in low complexity. 2 N-linked (GlcNAc...) asparagine glycosylation sites follow: Asn-126 and Asn-199. Glu-225 is a binding site for substrate. Asn-326 carries an N-linked (GlcNAc...) asparagine glycan. 359–363 (GAMEN) provides a ligand contact to substrate. Zn(2+) is bound at residue His-395. The Proton acceptor role is filled by Glu-396. Residues His-399 and Glu-418 each contribute to the Zn(2+) site. Asn-556, Asn-569, Asn-599, Asn-643, Asn-647, Asn-679, Asn-764, Asn-797, Asn-802, and Asn-829 each carry an N-linked (GlcNAc...) asparagine glycan. Arg-888 contacts substrate.

Belongs to the peptidase M1 family. As to quaternary structure, homodimer; disulfide-linked. Zn(2+) serves as cofactor.

Its subcellular location is the cell membrane. The catalysed reaction is Release of N-terminal glutamate (and to a lesser extent aspartate) from a peptide.. Substrate specificity is modulated by calcium which enhances the enzymatic activity for cleavage of acidic residues while reducing its activity with basic residues. Inhibited by aminopeptidase inhibitors amastatin and bestatin. Regulates central hypertension through its calcium-modulated preference to cleave N-terminal acidic residues from peptides such as angiotensin II. This chain is Glutamyl aminopeptidase (ENPEP), found in Bos taurus (Bovine).